Here is a 221-residue protein sequence, read N- to C-terminus: Deoxyribose-phosphate aldolase (221 aa).

Residue Asp-89 is the Proton donor/acceptor of the active site. Residue Lys-151 is the Schiff-base intermediate with acetaldehyde of the active site. Residue Lys-180 is the Proton donor/acceptor of the active site.

The protein belongs to the DeoC/FbaB aldolase family. DeoC type 1 subfamily.

The protein resides in the cytoplasm. The catalysed reaction is 2-deoxy-D-ribose 5-phosphate = D-glyceraldehyde 3-phosphate + acetaldehyde. The protein operates within carbohydrate degradation; 2-deoxy-D-ribose 1-phosphate degradation; D-glyceraldehyde 3-phosphate and acetaldehyde from 2-deoxy-alpha-D-ribose 1-phosphate: step 2/2. Functionally, catalyzes a reversible aldol reaction between acetaldehyde and D-glyceraldehyde 3-phosphate to generate 2-deoxy-D-ribose 5-phosphate. This Mesomycoplasma hyopneumoniae (strain J / ATCC 25934 / NCTC 10110) (Mycoplasma hyopneumoniae) protein is Deoxyribose-phosphate aldolase.